The chain runs to 611 residues: Serine protease FAM111A (611 aa).

Residues 16–28 (KCNMKIEHYFSPV) carry the PIP-box motif. K20 participates in a covalent cross-link: Glycyl lysine isopeptide (Lys-Gly) (interchain with G-Cter in SUMO2). S26 carries the phosphoserine modification. Residues K30 and K65 each participate in a glycyl lysine isopeptide (Lys-Gly) (interchain with G-Cter in SUMO2) cross-link. The disordered stretch occupies residues 44–73 (ESRGDPRATTNTQAQRFHSPKKNPEDQTMP). Residues 336 to 611 (KVTKNSSSIK…DVEMMSDEDL (276 aa)) are interaction with SV40 large T antigen. Catalysis depends on charge relay system residues H385, D439, and S541.

Belongs to the FAM111 family. As to quaternary structure, interacts (via PIP-box) with PCNA; then interaction is direct. (Microbial infection) Interacts with SV40 virus large T antigen and this interaction is required for efficient viral replication and sustained viral gene expression in restrictive cell types. In terms of assembly, (Microbial infection) Interacts with vaccinia virus protein OPG079; this interaction promotes the degradation of OPG079. In terms of processing, autocatalytically cleaved; activating the protein. Autocatalytic cleavage takes place in trans.

It is found in the nucleus. The protein localises to the chromosome. It localises to the cytoplasm. In terms of biological role, single-stranded DNA-binding serine protease that mediates the proteolytic cleavage of covalent DNA-protein cross-links (DPCs) during DNA synthesis, thereby playing a key role in maintaining genomic integrity. DPCs are highly toxic DNA lesions that interfere with essential chromatin transactions, such as replication and transcription, and which are induced by reactive agents, such as UV light or formaldehyde. Protects replication fork from stalling by removing DPCs, such as covalently trapped topoisomerase 1 (TOP1) adducts on DNA lesion, or poly(ADP-ribose) polymerase 1 (PARP1)-DNA complexes trapped by PARP inhibitors. Required for PCNA loading on replication sites. Promotes S-phase entry and DNA synthesis. Also acts as a restriction factor for some viruses including SV40 polyomavirus and vaccinia virus. Mechanistically, affects nuclear barrier function during viral replication by mediating the disruption of the nuclear pore complex (NPC) via its protease activity. In turn, interacts with vaccinia virus DNA-binding protein OPG079 in the cytoplasm and promotes its degradation without the need of its protease activity but through autophagy. The sequence is that of Serine protease FAM111A from Homo sapiens (Human).